The primary structure comprises 149 residues: Ribonuclease H (149 aa).

Positions 1–141 constitute an RNase H type-1 domain; that stretch reads MKTVTLFSDG…CDTMAREKAT (141 aa). The Mg(2+) site is built by D9, E47, D69, and D133.

The protein belongs to the RNase H family. Monomer. It depends on Mg(2+) as a cofactor.

It localises to the cytoplasm. It carries out the reaction Endonucleolytic cleavage to 5'-phosphomonoester.. Endonuclease that specifically degrades the RNA of RNA-DNA hybrids. This is Ribonuclease H from Campylobacter curvus (strain 525.92).